The following is a 692-amino-acid chain: Elongation factor G (692 aa).

The tr-type G domain maps to 8-282; sequence ENTRNIGIMA…AVIDYLPSPL (275 aa). Residues 17–24, 81–85, and 135–138 contribute to the GTP site; these read AHIDAGKT, DTPGH, and NKMD.

Belongs to the TRAFAC class translation factor GTPase superfamily. Classic translation factor GTPase family. EF-G/EF-2 subfamily.

It localises to the cytoplasm. In terms of biological role, catalyzes the GTP-dependent ribosomal translocation step during translation elongation. During this step, the ribosome changes from the pre-translocational (PRE) to the post-translocational (POST) state as the newly formed A-site-bound peptidyl-tRNA and P-site-bound deacylated tRNA move to the P and E sites, respectively. Catalyzes the coordinated movement of the two tRNA molecules, the mRNA and conformational changes in the ribosome. The sequence is that of Elongation factor G from Bacillus cereus (strain AH820).